The sequence spans 292 residues: Bis(5'-nucleosyl)-tetraphosphatase, symmetrical (292 aa).

A disordered region spans residues 271 to 292 (LSIEHPRHTHTPRRQAKKHSKK). The segment covering 277–292 (RHTHTPRRQAKKHSKK) has biased composition (basic residues).

Belongs to the Ap4A hydrolase family.

The enzyme catalyses P(1),P(4)-bis(5'-adenosyl) tetraphosphate + H2O = 2 ADP + 2 H(+). In terms of biological role, hydrolyzes diadenosine 5',5'''-P1,P4-tetraphosphate to yield ADP. The sequence is that of Bis(5'-nucleosyl)-tetraphosphatase, symmetrical (apaH) from Xylella fastidiosa (strain 9a5c).